The following is a 434-amino-acid chain: Serine--tRNA ligase (434 aa).

237–239 (TAE) serves as a coordination point for L-serine. Residue 268 to 270 (RAE) participates in ATP binding. Residue glutamate 291 coordinates L-serine. An ATP-binding site is contributed by 358 to 361 (EISS). Serine 393 serves as a coordination point for L-serine.

This sequence belongs to the class-II aminoacyl-tRNA synthetase family. Type-1 seryl-tRNA synthetase subfamily. In terms of assembly, homodimer. The tRNA molecule binds across the dimer.

The protein localises to the cytoplasm. The catalysed reaction is tRNA(Ser) + L-serine + ATP = L-seryl-tRNA(Ser) + AMP + diphosphate + H(+). It carries out the reaction tRNA(Sec) + L-serine + ATP = L-seryl-tRNA(Sec) + AMP + diphosphate + H(+). The protein operates within aminoacyl-tRNA biosynthesis; selenocysteinyl-tRNA(Sec) biosynthesis; L-seryl-tRNA(Sec) from L-serine and tRNA(Sec): step 1/1. Its function is as follows. Catalyzes the attachment of serine to tRNA(Ser). Is also able to aminoacylate tRNA(Sec) with serine, to form the misacylated tRNA L-seryl-tRNA(Sec), which will be further converted into selenocysteinyl-tRNA(Sec). The sequence is that of Serine--tRNA ligase from Rhodopseudomonas palustris (strain ATCC BAA-98 / CGA009).